We begin with the raw amino-acid sequence, 317 residues long: MQILLANPRGFCAGVDRAISIVERAIEMYGAPIYVRHEVVHNRYVVDSLRERGAIFIEDIAEVPDGSILIFSAHGVSQAVRAEARARELTMLFDATCPLVTKVHMEVARASRKGKEAILIGHAGHPEVEGTMGQYNNPKGGMYLVESPDDVWKLNVKDENNLCFMTQTTLSVDDTSAVIDALHRRFPKIIGPRKDDICYATTNRQEAVRNLANDADVVLVVGSKNSSNSNRLAELAQRMGKPAYLIDSAADIQESWLQNAKCIGVTAGASAPDILVQQVIARLQALGAVGSVELRGREESIVFEVPKELRVEVKQVD.

[4Fe-4S] cluster is bound at residue Cys12. (2E)-4-hydroxy-3-methylbut-2-enyl diphosphate-binding residues include His41 and His74. The dimethylallyl diphosphate site is built by His41 and His74. Positions 41 and 74 each coordinate isopentenyl diphosphate. Residue Cys97 participates in [4Fe-4S] cluster binding. Position 125 (His125) interacts with (2E)-4-hydroxy-3-methylbut-2-enyl diphosphate. Position 125 (His125) interacts with dimethylallyl diphosphate. Isopentenyl diphosphate is bound at residue His125. Glu127 acts as the Proton donor in catalysis. Position 168 (Thr168) interacts with (2E)-4-hydroxy-3-methylbut-2-enyl diphosphate. Cys198 lines the [4Fe-4S] cluster pocket. 4 residues coordinate (2E)-4-hydroxy-3-methylbut-2-enyl diphosphate: Ser226, Ser227, Asn228, and Ser270. Residues Ser226, Ser227, Asn228, and Ser270 each coordinate dimethylallyl diphosphate. The isopentenyl diphosphate site is built by Ser226, Ser227, Asn228, and Ser270.

The protein belongs to the IspH family. Homodimer. Requires [4Fe-4S] cluster as cofactor.

It catalyses the reaction isopentenyl diphosphate + 2 oxidized [2Fe-2S]-[ferredoxin] + H2O = (2E)-4-hydroxy-3-methylbut-2-enyl diphosphate + 2 reduced [2Fe-2S]-[ferredoxin] + 2 H(+). It carries out the reaction dimethylallyl diphosphate + 2 oxidized [2Fe-2S]-[ferredoxin] + H2O = (2E)-4-hydroxy-3-methylbut-2-enyl diphosphate + 2 reduced [2Fe-2S]-[ferredoxin] + 2 H(+). The protein operates within isoprenoid biosynthesis; dimethylallyl diphosphate biosynthesis; dimethylallyl diphosphate from (2E)-4-hydroxy-3-methylbutenyl diphosphate: step 1/1. It functions in the pathway isoprenoid biosynthesis; isopentenyl diphosphate biosynthesis via DXP pathway; isopentenyl diphosphate from 1-deoxy-D-xylulose 5-phosphate: step 6/6. Functionally, catalyzes the conversion of 1-hydroxy-2-methyl-2-(E)-butenyl 4-diphosphate (HMBPP) into a mixture of isopentenyl diphosphate (IPP) and dimethylallyl diphosphate (DMAPP). Acts in the terminal step of the DOXP/MEP pathway for isoprenoid precursor biosynthesis. This Yersinia enterocolitica serotype O:8 / biotype 1B (strain NCTC 13174 / 8081) protein is 4-hydroxy-3-methylbut-2-enyl diphosphate reductase.